A 234-amino-acid chain; its full sequence is Transcriptional regulatory protein CseB (234 aa).

One can recognise a Response regulatory domain in the interval 6–119 (HVLFVEDDDV…VLVARIRAVL (114 aa)). Residue D55 is modified to 4-aspartylphosphate. A DNA-binding region (ompR/PhoB-type) is located at residues 140–234 (GGVLTFGDLE…VRGFGYKLKA (95 aa)).

In terms of processing, phosphorylated by CseC.

The protein resides in the cytoplasm. Its function is as follows. Member of the two-component regulatory system CseB/CseC involved in the stability of the cell envelope. CseB activates transcription of RNA polymerase sigma-E factor, in response to changes in the cell envelope. The polypeptide is Transcriptional regulatory protein CseB (cseB) (Streptomyces coelicolor (strain ATCC BAA-471 / A3(2) / M145)).